Reading from the N-terminus, the 270-residue chain is Elongation factor Ts (270 aa).

The segment at 77-80 (TDFV) is involved in Mg(2+) ion dislocation from EF-Tu.

The protein belongs to the EF-Ts family.

The protein localises to the cytoplasm. Functionally, associates with the EF-Tu.GDP complex and induces the exchange of GDP to GTP. It remains bound to the aminoacyl-tRNA.EF-Tu.GTP complex up to the GTP hydrolysis stage on the ribosome. In Nocardioides sp. (strain ATCC BAA-499 / JS614), this protein is Elongation factor Ts.